Reading from the N-terminus, the 380-residue chain is Probable tRNA sulfurtransferase (380 aa).

Residues 58–162 (EEVIERLKKV…MAFVYAGVIE (105 aa)) form the THUMP domain. Residues 178-179 (LL), 203-204 (YF), Arg260, Gly282, and Gln291 contribute to the ATP site.

This sequence belongs to the ThiI family.

It localises to the cytoplasm. The catalysed reaction is [ThiI sulfur-carrier protein]-S-sulfanyl-L-cysteine + a uridine in tRNA + 2 reduced [2Fe-2S]-[ferredoxin] + ATP + H(+) = [ThiI sulfur-carrier protein]-L-cysteine + a 4-thiouridine in tRNA + 2 oxidized [2Fe-2S]-[ferredoxin] + AMP + diphosphate. It catalyses the reaction [ThiS sulfur-carrier protein]-C-terminal Gly-Gly-AMP + S-sulfanyl-L-cysteinyl-[cysteine desulfurase] + AH2 = [ThiS sulfur-carrier protein]-C-terminal-Gly-aminoethanethioate + L-cysteinyl-[cysteine desulfurase] + A + AMP + 2 H(+). The protein operates within cofactor biosynthesis; thiamine diphosphate biosynthesis. In terms of biological role, catalyzes the ATP-dependent transfer of a sulfur to tRNA to produce 4-thiouridine in position 8 of tRNAs, which functions as a near-UV photosensor. Also catalyzes the transfer of sulfur to the sulfur carrier protein ThiS, forming ThiS-thiocarboxylate. This is a step in the synthesis of thiazole, in the thiamine biosynthesis pathway. The sulfur is donated as persulfide by IscS. This chain is Probable tRNA sulfurtransferase, found in Thermoanaerobacter pseudethanolicus (strain ATCC 33223 / 39E) (Clostridium thermohydrosulfuricum).